Here is a 180-residue protein sequence, read N- to C-terminus: Probable chorismate pyruvate-lyase (180 aa).

The substrate site is built by Arg-73, Leu-111, and Glu-170.

The protein belongs to the UbiC family.

Its subcellular location is the cytoplasm. The enzyme catalyses chorismate = 4-hydroxybenzoate + pyruvate. It participates in cofactor biosynthesis; ubiquinone biosynthesis. In terms of biological role, removes the pyruvyl group from chorismate, with concomitant aromatization of the ring, to provide 4-hydroxybenzoate (4HB) for the ubiquinone pathway. This Nitrosospira multiformis (strain ATCC 25196 / NCIMB 11849 / C 71) protein is Probable chorismate pyruvate-lyase.